The following is a 675-amino-acid chain: Probable potassium transport system protein Kup (675 aa).

12 consecutive transmembrane segments (helical) span residues 12 to 32 (LGML…PLYV), 55 to 75 (VSLI…LVAL), 98 to 118 (WLIF…TLTP), 143 to 163 (WLVP…QVLG), 170 to 190 (SFGP…LLNI), 216 to 236 (MGIF…ALYS), 249 to 269 (TWPF…AWML), 296 to 316 (IAMI…LITG), 345 to 365 (IYIG…VWLF), 374 to 394 (AYGL…SQWV), 401 to 421 (FWSL…LVAS), and 428 to 448 (GGYL…VWFF).

It belongs to the HAK/KUP transporter (TC 2.A.72) family.

It is found in the cell membrane. The catalysed reaction is K(+)(in) + H(+)(in) = K(+)(out) + H(+)(out). Functionally, transport of potassium into the cell. Likely operates as a K(+):H(+) symporter. This is Probable potassium transport system protein Kup from Levilactobacillus brevis (strain ATCC 367 / BCRC 12310 / CIP 105137 / JCM 1170 / LMG 11437 / NCIMB 947 / NCTC 947) (Lactobacillus brevis).